The sequence spans 253 residues: Tropomyosin-1 (253 aa).

A coiled-coil region spans residues 7-253 (VNKLVRLQGK…MDDVGDDDTQ (247 aa)).

This sequence belongs to the tropomyosin family. In terms of assembly, homodimer.

Functionally, tropomyosin, in association with the troponin complex, plays a central role in the calcium dependent regulation of muscle contraction. The protein is Tropomyosin-1 (TROP1) of Hydra vulgaris (Hydra).